The primary structure comprises 271 residues: Urease accessory protein UreD (271 aa).

Belongs to the UreD family. As to quaternary structure, ureD, UreF and UreG form a complex that acts as a GTP-hydrolysis-dependent molecular chaperone, activating the urease apoprotein by helping to assemble the nickel containing metallocenter of UreC. The UreE protein probably delivers the nickel.

It is found in the cytoplasm. Required for maturation of urease via the functional incorporation of the urease nickel metallocenter. The polypeptide is Urease accessory protein UreD (Haemophilus influenzae (strain 86-028NP)).